The sequence spans 848 residues: MAKRLVLFVAVVVALVALTVAEGEASEQLQCERELQELQERELKACQQVMDQQLRDISPECHPVVVSPVAGQYEQQIVVPPKGGSFYPGETTPPQQLQQRIFWGIPALLKRYYPSVTCPQQVSYYPGQASPQRPGQGQQPGQGQQGYYPTSPQQPGQWQQPEQGQPRYYPTSPQQSGQLQQPAQGQQPGQGQQGQQPGQGQPGYYPTSSQLQPGQLQQPAQGQQGQQPGQAQQGQQPGQGQQPGQGQQGQQPGQGQQPGQGQQGQQLGQGQQGYYPTSLQQSGQGQPGYYPTSLQQLGQGQSGYYPTSPQQPGQGQQPGQLQQPAQGQQPGQGQQGQQPGQGQQGQQPGQGQQPGQGQPGYYPTSPQQSGQGQPGYYPTSSQQPTQSQQPGQGQQGQQVGQGQQAQQPGQGQQPGQGQPGYYPTSPQQSGQGQPGYYLTSPQQSGQGQQPGQLQQSAQGQKGQQPGQGQQPGQGQQGQQPGQGQQGQQPGQGQPGYYPTSPQQSGQGQQPGQWQQPGQGQPGYYPTSPLQPGQGQPGYDPTSPQQPGQGQQPGQLQQPAQGQQGQQLAQGQQGQQPAQVQQGQRPAQGQQGQQPGQGQQGQQLGQGQQGQQPGQGQQGQQPAQGQQGQQPGQGQQGQQPGQGQQGQQPGQGQQPGQGQPWYYPTSPQESGQGQQPGQWQQPGQGQPGYYLTSPLQLGQGQQGYYPTSLQQPGQGQQPGQWQQSGQGQHWYYPTSPQLSGQGQRPGQWLQPGQGQQGYYPTSPQQPGQGQQLGQWLQPGQGQQGYYPTSLQQTGQGQQSGQGQQGYYSSYHVSVEHQAASLKVAKAQQLAAQLPAMCRLEGGDALSASQ.

An N-terminal signal peptide occupies residues 1-21; it reads MAKRLVLFVAVVVALVALTVA. The disordered stretch occupies residues 124–804; that stretch reads YYPGQASPQR…GQQSGQGQQG (681 aa). Low complexity-rich tracts occupy residues 126 to 137, 145 to 166, 173 to 203, 210 to 240, 263 to 303, 310 to 351, 359 to 411, 419 to 468, 476 to 527, 544 to 659, 670 to 687, 709 to 727, and 739 to 795; these read PGQASPQRPGQG, QGYY…QGQP, PQQS…GQPG, QLQP…PGQG, QGQQ…GQSG, QQPG…PGQG, PGYY…PGQG, QGQQ…YPTS, QQPG…QGQP, GQGQ…GQPG, QQPG…GQGQ, and GQGQ…TGQG.

The protein belongs to the gliadin/glutenin family. Disulfide-bridge linked aggregates.

Glutenins are high-molecular weight seed storage proteins of wheat endosperm. Thought to be responsible for the visco-elastic property of wheat dough. This Triticum aestivum (Wheat) protein is Glutenin, high molecular weight subunit DX5 (GLU-1D-1D).